A 409-amino-acid polypeptide reads, in one-letter code: Snake venom metalloproteinase BITM02A (409 aa).

A signal peptide spans 1–20 (MIEVLLVTICLAAFPYQGSS). A propeptide spanning residues 21–189 (IILESGNVND…KKASQSNLTP (169 aa)) is cleaved from the precursor. The Peptidase M12B domain maps to 193 to 389 (RYIELFIVVD…ENPQCILNKR (197 aa)). Ca(2+) contacts are provided by E196 and D280. Cystine bridges form between C304–C384, C344–C368, and C346–C351. H329 is a Zn(2+) binding site. E330 is a catalytic residue. Zn(2+) is bound by residues H333 and H339. Positions 384, 387, 399, 402, 404, 406, and 409 each coordinate Ca(2+). A propeptide spanning residues 390 to 409 (LRTDTVSTPVSGNELLEAGE) is cleaved from the precursor.

This sequence belongs to the venom metalloproteinase (M12B) family. P-I subfamily. As to quaternary structure, monomer. Zn(2+) is required as a cofactor. Expressed by the venom gland.

It localises to the secreted. Snake venom metalloproteinase that impairs hemostasis in the envenomed animal. The sequence is that of Snake venom metalloproteinase BITM02A from Bothrops insularis (Golden lancehead).